The following is an 826-amino-acid chain: Disintegrin and metalloproteinase domain-containing protein 8 (826 aa).

The first 16 residues, methionine 1 to alanine 16, serve as a signal peptide directing secretion. Residues proline 17–serine 658 lie on the Extracellular side of the membrane. Asparagine 89 and asparagine 260 each carry an N-linked (GlcNAc...) asparagine glycan. The region spanning arginine 196–proline 395 is the Peptidase M12B domain. Cystine bridges form between cysteine 305–cysteine 390, cysteine 346–cysteine 374, cysteine 348–cysteine 357, cysteine 430–cysteine 452, cysteine 443–cysteine 449, cysteine 461–cysteine 481, cysteine 468–cysteine 498, cysteine 493–cysteine 503, cysteine 563–cysteine 615, cysteine 615–cysteine 625, cysteine 619–cysteine 631, and cysteine 633–cysteine 642. Histidine 329 contributes to the Zn(2+) binding site. Residue glutamate 330 is part of the active site. Positions 333 and 339 each coordinate Zn(2+). The 87-residue stretch at glycine 403–asparagine 489 folds into the Disintegrin domain. N-linked (GlcNAc...) asparagine glycosylation occurs at asparagine 431. One can recognise an EGF-like domain in the interval arginine 611–valine 643. N-linked (GlcNAc...) asparagine glycosylation occurs at asparagine 614. Residues leucine 659–tyrosine 683 traverse the membrane as a helical segment. Residues arginine 684–arginine 826 lie on the Cytoplasmic side of the membrane. Residues serine 701 to arginine 826 form a disordered region. Positions proline 733–proline 748 are enriched in pro residues. The segment covering glycine 749–proline 763 has biased composition (low complexity).

In terms of assembly, interacts with FST3. It depends on Zn(2+) as a cofactor. As to expression, macrophages.

The protein resides in the membrane. Functionally, possible involvement in extravasation of leukocytes. This is Disintegrin and metalloproteinase domain-containing protein 8 (Adam8) from Mus musculus (Mouse).